The following is a 398-amino-acid chain: uncharacterized protein (398 aa).

One can recognise a BIG2 domain in the interval 240–306 (SLNKNIDQLI…SITVTTNDGS (67 aa)).

This is an uncharacterized protein from Clostridium acetobutylicum (strain ATCC 824 / DSM 792 / JCM 1419 / IAM 19013 / LMG 5710 / NBRC 13948 / NRRL B-527 / VKM B-1787 / 2291 / W).